A 1080-amino-acid chain; its full sequence is DNA-directed RNA polymerase subunit beta (1080 aa).

This sequence belongs to the RNA polymerase beta chain family. In terms of assembly, in plastids the minimal PEP RNA polymerase catalytic core is composed of four subunits: alpha, beta, beta', and beta''. When a (nuclear-encoded) sigma factor is associated with the core the holoenzyme is formed, which can initiate transcription.

Its subcellular location is the plastid. It is found in the chloroplast. The catalysed reaction is RNA(n) + a ribonucleoside 5'-triphosphate = RNA(n+1) + diphosphate. Functionally, DNA-dependent RNA polymerase catalyzes the transcription of DNA into RNA using the four ribonucleoside triphosphates as substrates. This chain is DNA-directed RNA polymerase subunit beta, found in Mesostigma viride (Green alga).